The primary structure comprises 616 residues: Membrane protein insertase YidC (616 aa).

The helical transmembrane segment at 8 to 28 (MFVAIALSLVVLLGWHYFVTG) threads the bilayer. The segment at 33 to 85 (RQRQAAQSQTAQTGAPQTADGIPSPSPREGGPNAPAPGTLPGAAAQGPVSRED) is disordered. Composition is skewed to low complexity over residues 36-51 (QAAQSQTAQTGAPQTA) and 62-80 (GGPNAPAPGTLPGAAAQGP). Helical transmembrane passes span 386-406 (LLGNFGVSILLVTLILKLFFL), 460-480 (WPVLIQIPVFFALYKVLFITI), 516-536 (YIPIHLGVWPIIMGITMFIQM), and 551-571 (FAFMPIVFTFMLGSFPAGLVI).

This sequence belongs to the OXA1/ALB3/YidC family. Type 1 subfamily. As to quaternary structure, interacts with the Sec translocase complex via SecD. Specifically interacts with transmembrane segments of nascent integral membrane proteins during membrane integration.

Its subcellular location is the cell inner membrane. Its function is as follows. Required for the insertion and/or proper folding and/or complex formation of integral membrane proteins into the membrane. Involved in integration of membrane proteins that insert both dependently and independently of the Sec translocase complex, as well as at least some lipoproteins. Aids folding of multispanning membrane proteins. The polypeptide is Membrane protein insertase YidC (Methylorubrum extorquens (strain PA1) (Methylobacterium extorquens)).